Reading from the N-terminus, the 276-residue chain is Eukaryotic translation initiation factor 3 subunit G (276 aa).

Serine 148 carries the phosphoserine modification. The region spanning 195–274 is the RRM domain; that stretch reads TTLKISQLNS…LILHLEWSKK (80 aa).

Belongs to the eIF-3 subunit G family. As to quaternary structure, component of the eukaryotic translation initiation factor 3 (eIF-3) complex.

The protein localises to the cytoplasm. Functionally, RNA-binding component of the eukaryotic translation initiation factor 3 (eIF-3) complex, which is involved in protein synthesis of a specialized repertoire of mRNAs and, together with other initiation factors, stimulates binding of mRNA and methionyl-tRNAi to the 40S ribosome. The eIF-3 complex specifically targets and initiates translation of a subset of mRNAs involved in cell proliferation. This subunit can bind 18S rRNA. The chain is Eukaryotic translation initiation factor 3 subunit G from Debaryomyces hansenii (strain ATCC 36239 / CBS 767 / BCRC 21394 / JCM 1990 / NBRC 0083 / IGC 2968) (Yeast).